A 481-amino-acid chain; its full sequence is Aspartyl/glutamyl-tRNA(Asn/Gln) amidotransferase subunit B (481 aa).

This sequence belongs to the GatB/GatE family. GatB subfamily. In terms of assembly, heterotrimer of A, B and C subunits.

The catalysed reaction is L-glutamyl-tRNA(Gln) + L-glutamine + ATP + H2O = L-glutaminyl-tRNA(Gln) + L-glutamate + ADP + phosphate + H(+). The enzyme catalyses L-aspartyl-tRNA(Asn) + L-glutamine + ATP + H2O = L-asparaginyl-tRNA(Asn) + L-glutamate + ADP + phosphate + 2 H(+). Allows the formation of correctly charged Asn-tRNA(Asn) or Gln-tRNA(Gln) through the transamidation of misacylated Asp-tRNA(Asn) or Glu-tRNA(Gln) in organisms which lack either or both of asparaginyl-tRNA or glutaminyl-tRNA synthetases. The reaction takes place in the presence of glutamine and ATP through an activated phospho-Asp-tRNA(Asn) or phospho-Glu-tRNA(Gln). This chain is Aspartyl/glutamyl-tRNA(Asn/Gln) amidotransferase subunit B, found in Ectopseudomonas mendocina (strain ymp) (Pseudomonas mendocina).